A 560-amino-acid polypeptide reads, in one-letter code: uncharacterized protein (560 aa).

An N-terminal signal peptide occupies residues 1 to 29 (MKSALKKSVVSTSISLILASGMAAFAAHA). Ca(2+) contacts are provided by Asp66, Asp67, and Ser132. The Nucleophile role is filled by Ser132. Ser132 carries the 3-oxoalanine (Ser) modification. His185 is an active-site residue. Ca(2+)-binding residues include Asp345 and Asn346.

This sequence belongs to the sulfatase family. The cofactor is Ca(2+). In terms of processing, the conversion to 3-oxoalanine (also known as C-formylglycine, FGly), of a serine or cysteine residue in prokaryotes and of a cysteine residue in eukaryotes, is critical for catalytic activity.

This is an uncharacterized protein from Escherichia coli (strain K12).